The primary structure comprises 517 residues: Glycerol kinase (517 aa).

Residue Thr-24 coordinates ADP. 3 residues coordinate ATP: Thr-24, Thr-25, and Ser-26. Thr-24 contacts sn-glycerol 3-phosphate. Arg-28 is an ADP binding site. Residues Arg-94, Glu-95, Tyr-146, and Asp-261 each coordinate sn-glycerol 3-phosphate. Positions 94, 95, 146, 261, and 262 each coordinate glycerol. The ADP site is built by Thr-283 and Gly-327. The ATP site is built by Thr-283, Gly-327, Gln-331, and Gly-428. 2 residues coordinate ADP: Gly-428 and Asn-432.

The protein belongs to the FGGY kinase family.

The enzyme catalyses glycerol + ATP = sn-glycerol 3-phosphate + ADP + H(+). It functions in the pathway polyol metabolism; glycerol degradation via glycerol kinase pathway; sn-glycerol 3-phosphate from glycerol: step 1/1. Inhibited by fructose 1,6-bisphosphate (FBP). Functionally, key enzyme in the regulation of glycerol uptake and metabolism. Catalyzes the phosphorylation of glycerol to yield sn-glycerol 3-phosphate. In Mycobacterium tuberculosis (strain ATCC 25177 / H37Ra), this protein is Glycerol kinase.